A 132-amino-acid polypeptide reads, in one-letter code: Baseplate wedge protein gp25 (132 aa).

It belongs to the GpW/Gp25 family. As to quaternary structure, homodimer. Interacts with gp53 and with the (gp6)2-gp7 heterotrimeric molecule; The gp25-(gp6)2-gp7 module is involved in sheath contraction. Part of the baseplate macromolecular complex which consists of gp5, gp5.4, gp27 (central spike complex); gp6, gp25, gp53 (inner baseplate); gp7, gp8 (intermediate baseplate); gp9, gp10, gp11, gp12 (peripheral); gp48 and gp54 (proximal region of the tail tube).

The protein localises to the virion. Baseplate protein that is located next to the tail tube (inner baseplate). Involved in sheath assembly. The gp25-(gp6)2-gp7 module is involved in sheath contraction. This Enterobacteria phage T4 (Bacteriophage T4) protein is Baseplate wedge protein gp25 (25).